The sequence spans 255 residues: ParA family protein CPn_0805/CP_1066/CPj0805/CpB0834 (255 aa).

This sequence belongs to the ParA family.

This chain is ParA family protein CPn_0805/CP_1066/CPj0805/CpB0834, found in Chlamydia pneumoniae (Chlamydophila pneumoniae).